The following is a 462-amino-acid chain: Zinc transporter 6-B (462 aa).

Over 1 to 33 the chain is Cytoplasmic; the sequence is MGTIYLFRKTQRSLLGKLTQEFRLVTADRRSWK. Residues 34 to 54 traverse the membrane as a helical segment; that stretch reads ILLFGAINVVCTGFLLTWCSS. Topologically, residues 55–64 are extracellular; it reads TNSMALTAYT. The helical transmembrane segment at 65 to 85 threads the bilayer; sequence YLTIFDLFSLITSLISYWVMM. At 86–98 the chain is on the cytoplasmic side; the sequence is KKPSPTYSFGFER. A helical membrane pass occupies residues 99–119; it reads LEVLAVFASTVLAQLGALFIL. The Extracellular segment spans residues 120 to 134; that stretch reads KESAERFLEQPEIHT. The chain crosses the membrane as a helical span at residues 135 to 155; the sequence is GRLLVGTFVALFFNLFTMLSI. Over 156 to 200 the chain is Cytoplasmic; sequence RNKPFAYVSEAASTSWLQEHVADLSRSLCGVIPGLSSIFLPRMNP. The chain crosses the membrane as a helical span at residues 201 to 221; it reads FVLIDIAGALALCITYMLIEI. Residues 222-223 lie on the Extracellular side of the membrane; that stretch reads NN. The chain crosses the membrane as a helical span at residues 224–244; the sequence is YFAVDTASAIAIAVMTFGTMY. The Cytoplasmic portion of the chain corresponds to 245-462; that stretch reads PMSVYSGKVL…TPGQFTQFRQ (218 aa).

This sequence belongs to the cation diffusion facilitator (CDF) transporter (TC 2.A.4) family. SLC30A subfamily. In terms of assembly, heterodimer with SLC30A5; form a functional zinc ion transmembrane transporter.

The protein localises to the golgi apparatus. It is found in the trans-Golgi network membrane. Its function is as follows. Has probably no intrinsic transporter activity but together with SLC30A5 forms a functional zinc ion:proton antiporter heterodimer, mediating zinc entry into the lumen of organelles along the secretory pathway. As part of that zinc ion:proton antiporter, contributes to zinc ion homeostasis within the early secretory pathway and regulates the activation and folding of enzymes like alkaline phosphatases and enzymes involved in phosphatidylinositol glycan anchor biosynthesis. This chain is Zinc transporter 6-B (slc30a6-b), found in Xenopus laevis (African clawed frog).